Consider the following 199-residue polypeptide: Recombination protein RecR (199 aa).

A C4-type zinc finger spans residues 57–72 (CRQCRTLTEDELCPQC). Residues 80–174 (SLLCVVQSPV…TISRIAHGVP (95 aa)) enclose the Toprim domain.

It belongs to the RecR family.

In terms of biological role, may play a role in DNA repair. It seems to be involved in an RecBC-independent recombinational process of DNA repair. It may act with RecF and RecO. This is Recombination protein RecR from Stutzerimonas stutzeri (strain A1501) (Pseudomonas stutzeri).